The primary structure comprises 441 residues: Proline--tRNA ligase (441 aa).

The protein belongs to the class-II aminoacyl-tRNA synthetase family. ProS type 2 subfamily. As to quaternary structure, homodimer.

It localises to the cytoplasm. The enzyme catalyses tRNA(Pro) + L-proline + ATP = L-prolyl-tRNA(Pro) + AMP + diphosphate. Catalyzes the attachment of proline to tRNA(Pro) in a two-step reaction: proline is first activated by ATP to form Pro-AMP and then transferred to the acceptor end of tRNA(Pro). The sequence is that of Proline--tRNA ligase from Methylorubrum populi (strain ATCC BAA-705 / NCIMB 13946 / BJ001) (Methylobacterium populi).